Consider the following 80-residue polypeptide: Exodeoxyribonuclease 7 small subunit (80 aa).

It belongs to the XseB family. As to quaternary structure, heterooligomer composed of large and small subunits.

The protein resides in the cytoplasm. The catalysed reaction is Exonucleolytic cleavage in either 5'- to 3'- or 3'- to 5'-direction to yield nucleoside 5'-phosphates.. Bidirectionally degrades single-stranded DNA into large acid-insoluble oligonucleotides, which are then degraded further into small acid-soluble oligonucleotides. The chain is Exodeoxyribonuclease 7 small subunit from Aliivibrio fischeri (strain ATCC 700601 / ES114) (Vibrio fischeri).